The following is a 129-amino-acid chain: MHPGSKTMRYPHPCRATMFEAVFRRRLDALGMTISGSLATSELRNTFRQETIMRHWAVSKEFSGMSPEERDERLLTIAHLEPIAAHVLASDDCIFDVSRIGADLMELDLRENGGSGHQASSETGFHHVR.

This is an uncharacterized protein from Sinorhizobium fredii (strain NBRC 101917 / NGR234).